A 562-amino-acid polypeptide reads, in one-letter code: NAD-dependent malic enzyme (562 aa).

Catalysis depends on Tyr101, which acts as the Proton donor. Arg154 provides a ligand contact to NAD(+). The Proton acceptor role is filled by Lys172. A divalent metal cation-binding residues include Glu243, Asp244, and Asp267. NAD(+) contacts are provided by Asp267 and Asn415.

This sequence belongs to the malic enzymes family. Homotetramer. It depends on Mg(2+) as a cofactor. Mn(2+) serves as cofactor.

It carries out the reaction (S)-malate + NAD(+) = pyruvate + CO2 + NADH. The enzyme catalyses oxaloacetate + H(+) = pyruvate + CO2. The chain is NAD-dependent malic enzyme from Shewanella baltica (strain OS223).